The following is a 1481-amino-acid chain: MAAPAQPKKIVAPTVSQINAEFVTQLACKYWAPHIKKKSPFDIKVIEEIYEKEIVKSRFAIRKIMLLEFSQYLENYLWMNYSPEVSSKAYLMSICCMVNEKFRENVPAWETFKKKPDHFPFFFKCILKAALAETDGEFSLHEQTLLLLFLDHCFNSLEVDLIRSQVQQLISLPMWMGLQPARLELELKKTPKLRKFWNLIKKNDEKMDPEAREQAYQERRFLSRLIQKFISVLKSIPLSEPVTMDKVHYCERFIELMIDLEALLPTRRWFNTILDDSHLLVHCYLSSLVHREEDGHLFSQLLDMLKFYTGFEINDQTGNALTENEMTTIHYDRITSLQRAAFAHFPELYDFALSNVAEVDARDSLVKFFGPLSSNTLHQVASYLCLLPTLPKNEDTTFDKEFLLELLVSRHERRISQIQQLNQMPLYPTEKIIWDENIVPTEYYSGEGCLALPKLNLQFLTLHDYLLRNFNLFRLESTYEIRQDIEDSVSRMKPWQSEYGGVVFGGWARMAQPIVAFTVVEVAKPNIGENWPTRVRADVTINLNVRDHIKDEWEGLRKHDVCFLITVRPTKPYGTKFDRRRPFIEQVGLVYVRGCEIQGMLDDKGRVIEDGPEPRPNLRGESRTFRVFLDPNQYQQDMTNTIQNGAEDVYDTFNVIMRRKPKENNFKAVLETIRNLMNTDCVVPDWLHDIILGYGDPSSAHYSKMPNQIATLDFNDTFLSIEHLKASFPGHNVKVTVSDPALQIPPFRITFPVRSGKGKKRKDADGEEDDTEEAKTLIVEPHVIPNRGPYPYNQPKRNTIQFTHTQIEAIRAGMQPGLTMVVGPPGTGKTDVAVQIISNIYHNFPEQRTLIVTHSNQALNQLFEKIMALDIDERHLLRLGHGEEELETEKDFSRYGRVNYVLARRIELLEEVKRLQKSLGVPGDASYTCETAGYFFLYQVMSRWEEYMSRVKNSGTACPDAAPDAAQVATFFPFHEYFANAPQPIFKGRSYEEDMEIAEGCFRHIKKIFTQLEEFRASELLRSGLDRSKYLLVKEAKIIAMTCTHAALKRHDLVKLGFKYDNILMEEAAQILEIETFIPLLLQNPQDGFSRLKRWIMIGDHHQLPPVIKNMAFQKYSNMEQSLFTRFVRVGVPTVDLDAQGRARASLCNLYNWRYKNLGNLPHVQLLPEFSTANAGLLYDFQLINVEDFQGVGESEPNPYFYQNLGEAEYVVALFMYMCLLGYPADKISILTTYNGQKHLIRDIINRRCGNNPLIGRPNKVTTVDRFQGQQNDYILLSLVRTRAVGHLRDVRRLVVAMSRARLGLYIFARVSLFQNCFELTPAFSQLTARPLHLHIIPTEPFPTSRKNGERPPHEVQVIKNMPQMANFVYNMYMHLIQTTHHYHQTFLQLPPAMVEEGEEGQSQETEMEAEEETVSAQGNLTPSPADASLSQETPAAQPDCSSQTEDTSAPCDIATAAEPVSAAAEAATPQDAESVPTETE.

A helical region with structural similarity to ARM repeat domains region spans residues 1 to 416 (MAAPAQPKKI…LVSRHERRIS (416 aa)). The tract at residues 417-1481 (QIQQLNQMPL…DAESVPTETE (1065 aa)) is required for assembly of the IB complex. The tract at residues 754 to 773 (RSGKGKKRKDADGEEDDTEE) is disordered. ATP-binding positions include Q801, Q806, and 826 to 831 (GTGKTD). At K1055 the chain carries N6-acetyllysine. Residues 1396-1414 (EEGEEGQSQETEMEAEEET) are compositionally biased toward acidic residues. The disordered stretch occupies residues 1396–1481 (EEGEEGQSQE…DAESVPTETE (86 aa)). The segment covering 1418-1448 (QGNLTPSPADASLSQETPAAQPDCSSQTEDT) has biased composition (polar residues). Over residues 1455–1468 (ATAAEPVSAAAEAA) the composition is skewed to low complexity.

The protein belongs to the CWF11 family. Identified in the spliceosome C complex. Component of the XAB2 complex, a multimeric protein complex composed of XAB2, PRPF19, AQR, ZNF830, ISY1, and PPIE. Identified in a pentameric intron-binding (IB) complex composed of AQR, XAB2, ISY1, ZNF830 and PPIE that is incorporated into the spliceosome as a preassembled complex. The IB complex does not contain PRPF19. Within the spliceosome, interacts with SNRPA1, SF3B1, SF3B3, SF3A1 and SF3A2.

The protein resides in the nucleus. It is found in the nucleoplasm. The enzyme catalyses ATP + H2O = ADP + phosphate + H(+). Involved in pre-mRNA splicing as component of the spliceosome. Intron-binding spliceosomal protein required to link pre-mRNA splicing and snoRNP (small nucleolar ribonucleoprotein) biogenesis. Plays a key role in position-dependent assembly of intron-encoded box C/D small snoRNP, splicing being required for snoRNP assembly. May act by helping the folding of the snoRNA sequence. Binds to intron of pre-mRNAs in a sequence-independent manner, contacting the region between snoRNA and the branchpoint of introns (40 nucleotides upstream of the branchpoint) during the late stages of splicing. Has ATP-dependent RNA helicase activity and can unwind double-stranded RNA molecules with a 3' overhang (in vitro). In Mus musculus (Mouse), this protein is RNA helicase aquarius (Aqr).